A 382-amino-acid polypeptide reads, in one-letter code: Glucose-1-phosphate adenylyltransferase (382 aa).

Residues tyrosine 100, glycine 165, 180–181 (EK), and serine 191 contribute to the alpha-D-glucose 1-phosphate site.

This sequence belongs to the bacterial/plant glucose-1-phosphate adenylyltransferase family. As to quaternary structure, homotetramer.

The catalysed reaction is alpha-D-glucose 1-phosphate + ATP + H(+) = ADP-alpha-D-glucose + diphosphate. It participates in glycan biosynthesis; glycogen biosynthesis. Its function is as follows. Involved in the biosynthesis of ADP-glucose, a building block required for the elongation reactions to produce glycogen. Catalyzes the reaction between ATP and alpha-D-glucose 1-phosphate (G1P) to produce pyrophosphate and ADP-Glc. The protein is Glucose-1-phosphate adenylyltransferase of Clostridium novyi (strain NT).